Consider the following 222-residue polypeptide: 2-C-methyl-D-erythritol 4-phosphate cytidylyltransferase (222 aa).

Belongs to the IspD/TarI cytidylyltransferase family. IspD subfamily.

It carries out the reaction 2-C-methyl-D-erythritol 4-phosphate + CTP + H(+) = 4-CDP-2-C-methyl-D-erythritol + diphosphate. Its pathway is isoprenoid biosynthesis; isopentenyl diphosphate biosynthesis via DXP pathway; isopentenyl diphosphate from 1-deoxy-D-xylulose 5-phosphate: step 2/6. Functionally, catalyzes the formation of 4-diphosphocytidyl-2-C-methyl-D-erythritol from CTP and 2-C-methyl-D-erythritol 4-phosphate (MEP). The protein is 2-C-methyl-D-erythritol 4-phosphate cytidylyltransferase of Thermotoga neapolitana (strain ATCC 49049 / DSM 4359 / NBRC 107923 / NS-E).